We begin with the raw amino-acid sequence, 350 residues long: tRNA uridine(34) hydroxylase (350 aa).

Residues 146–240 (DDPDALFIDM…YARKARDQGL (95 aa)) enclose the Rhodanese domain. Residue Cys-200 is the Cysteine persulfide intermediate of the active site.

Belongs to the TrhO family.

The catalysed reaction is uridine(34) in tRNA + AH2 + O2 = 5-hydroxyuridine(34) in tRNA + A + H2O. Its function is as follows. Catalyzes oxygen-dependent 5-hydroxyuridine (ho5U) modification at position 34 in tRNAs, the first step in 5-carboxymethoxyuridine (cmo5U) biosynthesis. May be part of an alternate pathway, which is able to bypass cmo5U biogenesis in a subset of tRNAs under aerobic conditions. This chain is tRNA uridine(34) hydroxylase, found in Escherichia coli O6:K15:H31 (strain 536 / UPEC).